Reading from the N-terminus, the 289-residue chain is T-cell ecto-ADP-ribosyltransferase 2 (289 aa).

Residues 1–20 (MTSKIFKFFLTWWLTQQVTG) form the signal peptide. 2 disulfide bridges follow: C41–C246 and C141–C193. The region spanning 61–241 (EELKLEWEKA…IFLDSPERKK (181 aa)) is the TR mART core domain. An N-linked (GlcNAc...) asparagine glycan is attached at N79. Positions 98, 146, and 164 each coordinate NAD(+). Residue R146 is part of the active site. Residue S167 is part of the active site. S202 lines the NAD(+) pocket. Residue E209 is part of the active site. N249 is a glycosylation site (N-linked (GlcNAc...) asparagine). The GPI-anchor amidated serine moiety is linked to residue S260. Positions 261–289 (ISGSRESCVSLFLVVLLGLLVQQLTLAEL) are cleaved as a propeptide — removed in mature form.

This sequence belongs to the Arg-specific ADP-ribosyltransferase family. Expressed in spleen, intestine and thymus.

The protein resides in the cell membrane. The enzyme catalyses L-arginyl-[protein] + NAD(+) = N(omega)-(ADP-D-ribosyl)-L-arginyl-[protein] + nicotinamide + H(+). It carries out the reaction NAD(+) + H2O = ADP-D-ribose + nicotinamide + H(+). Its function is as follows. Has both NAD(+) glycohydrolase and ADP-ribosyltransferase activity. This is T-cell ecto-ADP-ribosyltransferase 2 (Art2b) from Mus musculus (Mouse).